Consider the following 411-residue polypeptide: Tyrosine--tRNA ligase (411 aa).

An L-tyrosine-binding site is contributed by Tyr33. The 'HIGH' region signature appears at 38-47; it reads PTAESLHLGN. Residues Tyr160 and Gln164 each coordinate L-tyrosine. A 'KMSKS' region motif is present at residues 222–226; the sequence is KIGKS. Lys225 provides a ligand contact to ATP. The 65-residue stretch at 347–411 folds into the S4 RNA-binding domain; the sequence is SVIETLIKNK…KKQVILFKTV (65 aa).

Belongs to the class-I aminoacyl-tRNA synthetase family. TyrS type 1 subfamily. Homodimer.

It localises to the cytoplasm. The catalysed reaction is tRNA(Tyr) + L-tyrosine + ATP = L-tyrosyl-tRNA(Tyr) + AMP + diphosphate + H(+). Its function is as follows. Catalyzes the attachment of tyrosine to tRNA(Tyr) in a two-step reaction: tyrosine is first activated by ATP to form Tyr-AMP and then transferred to the acceptor end of tRNA(Tyr). In Mycoplasmopsis agalactiae (strain NCTC 10123 / CIP 59.7 / PG2) (Mycoplasma agalactiae), this protein is Tyrosine--tRNA ligase.